The sequence spans 1979 residues: Myosin-11 (1979 aa).

At Ser-2 the chain carries Blocked amino end (Ser). Residues 30 to 80 (SAKKLVWVPSEKHGFEAASIKEEKGDEVTVELQENGKKVTLSKDDIQKMNP) form the Myosin N-terminal SH3-like domain. Residues 84–789 (SKVEDMAELT…VLAHLEEERD (706 aa)) form the Myosin motor domain. Residue Lys-128 is modified to N6,N6,N6-trimethyllysine. 177-184 (GESGAGKT) contacts ATP. Actin-binding regions lie at residues 667-689 (LTKL…IPNH) and 768-782 (RIGQ…GVLA). The IQ domain occupies 792–821 (ITDVIIAFQAQCRGYLARKAFAKRQQQLTA). The tract at residues 850–1979 (LLQVTRQEEE…DGDFNGKASE (1130 aa)) is rodlike tail (S2 and LMM domains). Residues 850 to 1979 (LLQVTRQEEE…DGDFNGKASE (1130 aa)) adopt a coiled-coil conformation. 3 disordered regions span residues 1130-1150 (QEDL…KRDL), 1709-1736 (RKQA…LQDE), and 1891-1979 (QLEE…KASE). Positions 1135–1150 (SEKAARNKAEKQKRDL) are enriched in basic and acidic residues. Residues 1968 to 1979 (GRDGDFNGKASE) are compositionally biased toward basic and acidic residues.

The protein belongs to the TRAFAC class myosin-kinesin ATPase superfamily. Myosin family. In terms of assembly, muscle myosin is a hexameric protein that consists of 2 heavy chain subunits (MHC), 2 alkali light chain subunits (MLC) and 2 regulatory light chain subunits (MLC-2).

It is found in the cytoplasm. Its subcellular location is the myofibril. Its function is as follows. Muscle contraction. In Gallus gallus (Chicken), this protein is Myosin-11 (MYH11).